The sequence spans 451 residues: Bifunctional protein GlmU (451 aa).

Positions 1-217 (MKTLILAAGL…IDEVTGVNDR (217 aa)) are pyrophosphorylase. UDP-N-acetyl-alpha-D-glucosamine-binding positions include 6–9 (LAAG), K20, Q68, 73–74 (GT), 95–97 (YGD), G134, E146, N161, and N215. D97 is a Mg(2+) binding site. N215 is a binding site for Mg(2+). A linker region spans residues 218-238 (IQLSKLEKNMRKRINEKLMRE). Residues 239 to 451 (GVRIIDPESV…GGNQNADSKE (213 aa)) are N-acetyltransferase. UDP-N-acetyl-alpha-D-glucosamine-binding residues include R320 and K338. The active-site Proton acceptor is the H350. 2 residues coordinate UDP-N-acetyl-alpha-D-glucosamine: Y353 and N364. Acetyl-CoA contacts are provided by residues A367, 373–374 (NY), S392, A410, and R427.

It in the N-terminal section; belongs to the N-acetylglucosamine-1-phosphate uridyltransferase family. In the C-terminal section; belongs to the transferase hexapeptide repeat family. As to quaternary structure, homotrimer. The cofactor is Mg(2+).

It localises to the cytoplasm. The enzyme catalyses alpha-D-glucosamine 1-phosphate + acetyl-CoA = N-acetyl-alpha-D-glucosamine 1-phosphate + CoA + H(+). It catalyses the reaction N-acetyl-alpha-D-glucosamine 1-phosphate + UTP + H(+) = UDP-N-acetyl-alpha-D-glucosamine + diphosphate. It participates in nucleotide-sugar biosynthesis; UDP-N-acetyl-alpha-D-glucosamine biosynthesis; N-acetyl-alpha-D-glucosamine 1-phosphate from alpha-D-glucosamine 6-phosphate (route II): step 2/2. It functions in the pathway nucleotide-sugar biosynthesis; UDP-N-acetyl-alpha-D-glucosamine biosynthesis; UDP-N-acetyl-alpha-D-glucosamine from N-acetyl-alpha-D-glucosamine 1-phosphate: step 1/1. Its pathway is bacterial outer membrane biogenesis; LPS lipid A biosynthesis. Functionally, catalyzes the last two sequential reactions in the de novo biosynthetic pathway for UDP-N-acetylglucosamine (UDP-GlcNAc). The C-terminal domain catalyzes the transfer of acetyl group from acetyl coenzyme A to glucosamine-1-phosphate (GlcN-1-P) to produce N-acetylglucosamine-1-phosphate (GlcNAc-1-P), which is converted into UDP-GlcNAc by the transfer of uridine 5-monophosphate (from uridine 5-triphosphate), a reaction catalyzed by the N-terminal domain. The chain is Bifunctional protein GlmU from Thermosipho africanus (strain TCF52B).